A 137-amino-acid polypeptide reads, in one-letter code: Large ribosomal subunit protein uL16 (137 aa).

This sequence belongs to the universal ribosomal protein uL16 family. In terms of assembly, part of the 50S ribosomal subunit.

Its function is as follows. Binds 23S rRNA and is also seen to make contacts with the A and possibly P site tRNAs. The protein is Large ribosomal subunit protein uL16 of Alcanivorax borkumensis (strain ATCC 700651 / DSM 11573 / NCIMB 13689 / SK2).